The chain runs to 237 residues: Segregation and condensation protein A (237 aa).

It belongs to the ScpA family. As to quaternary structure, component of a cohesin-like complex composed of ScpA, ScpB and the Smc homodimer, in which ScpA and ScpB bind to the head domain of Smc. The presence of the three proteins is required for the association of the complex with DNA.

Its subcellular location is the cytoplasm. Participates in chromosomal partition during cell division. May act via the formation of a condensin-like complex containing Smc and ScpB that pull DNA away from mid-cell into both cell halves. The sequence is that of Segregation and condensation protein A from Streptococcus thermophilus (strain CNRZ 1066).